Reading from the N-terminus, the 191-residue chain is Vascular endothelial growth factor A (191 aa).

An N-terminal signal peptide occupies residues 1–26; the sequence is MNFLLTWIHWGLAALLYFHNAKVLQA. Intrachain disulfides connect cysteine 52/cysteine 94, cysteine 83/cysteine 128, and cysteine 87/cysteine 130. N-linked (GlcNAc...) asparagine glycosylation occurs at asparagine 101.

This sequence belongs to the PDGF/VEGF growth factor family. As to quaternary structure, homodimer; disulfide-linked. Also found as heterodimer with PGF. As to expression, expressed by the venom gland, and probably other tissues.

Its subcellular location is the secreted. In terms of biological role, growth factor active in angiogenesis, vasculogenesis and endothelial cell growth. Induces endothelial cell proliferation, promotes cell migration, inhibits apoptosis and induces permeabilization of blood vessels. Binds to heparan sulfate and heparin. This is Vascular endothelial growth factor A from Bitis gabonica (Gaboon adder).